Consider the following 475-residue polypeptide: Methylenetetrahydrofolate--tRNA-(uracil-5-)-methyltransferase TrmFO (475 aa).

An FAD-binding site is contributed by Gly-9 to Gly-14. Residues Ala-427–Arg-447 form a disordered region.

It belongs to the MnmG family. TrmFO subfamily. FAD is required as a cofactor.

Its subcellular location is the cytoplasm. It catalyses the reaction uridine(54) in tRNA + (6R)-5,10-methylene-5,6,7,8-tetrahydrofolate + NADH + H(+) = 5-methyluridine(54) in tRNA + (6S)-5,6,7,8-tetrahydrofolate + NAD(+). The catalysed reaction is uridine(54) in tRNA + (6R)-5,10-methylene-5,6,7,8-tetrahydrofolate + NADPH + H(+) = 5-methyluridine(54) in tRNA + (6S)-5,6,7,8-tetrahydrofolate + NADP(+). Catalyzes the folate-dependent formation of 5-methyl-uridine at position 54 (M-5-U54) in all tRNAs. The chain is Methylenetetrahydrofolate--tRNA-(uracil-5-)-methyltransferase TrmFO from Methylobacterium radiotolerans (strain ATCC 27329 / DSM 1819 / JCM 2831 / NBRC 15690 / NCIMB 10815 / 0-1).